The sequence spans 500 residues: NAD(P)H-quinone oxidoreductase chain 4, chloroplastic (500 aa).

A run of 14 helical transmembrane segments spans residues 4–24, 35–55, 87–107, 113–130, 134–154, 167–187, 211–231, 242–262, 272–292, 305–325, 330–350, 386–406, 416–436, and 462–482; these read FPWL…MLFL, YTIC…CYNF, IGTI…AFPV, LFHF…GSFS, LLLF…LLAM, FILY…GLSL, ILFY…IPLH, HYST…YGLV, AHSM…IYAA, IAYS…SITD, GAIL…FLAG, LALP…GIIT, ILII…LLSM, and LFLS…PDFV.

It belongs to the complex I subunit 4 family.

It is found in the plastid. It localises to the chloroplast thylakoid membrane. It catalyses the reaction a plastoquinone + NADH + (n+1) H(+)(in) = a plastoquinol + NAD(+) + n H(+)(out). The enzyme catalyses a plastoquinone + NADPH + (n+1) H(+)(in) = a plastoquinol + NADP(+) + n H(+)(out). The chain is NAD(P)H-quinone oxidoreductase chain 4, chloroplastic from Lepidium virginicum (Virginia pepperweed).